The chain runs to 473 residues: BPI fold-containing family B member 3 (473 aa).

An N-terminal signal peptide occupies residues 1 to 20 (MMPGVYALLLLWGLATPCLG). N-linked (GlcNAc...) asparagine glycosylation is present at Asn139. Cys161 and Cys196 are joined by a disulfide.

It belongs to the BPI/LBP/Plunc superfamily. BPI/LBP family. As to expression, highly expressed in olfactory mucosa but undetectable in thymus, kidney, lung, brain, spleen and liver.

The protein localises to the secreted. In terms of biological role, may have the capacity to recognize and bind specific classes of odorants. May act as a carrier molecule, transporting odorants across the mucus layer to access receptor sites. May serve as a primary defense mechanism by recognizing and removing potentially harmful odorants or pathogenic microorganisms from the mucosa or clearing excess odorant from mucus to enable new odorant stimuli to be received. The sequence is that of BPI fold-containing family B member 3 from Rattus norvegicus (Rat).